A 316-amino-acid polypeptide reads, in one-letter code: 4-hydroxy-3-methylbut-2-enyl diphosphate reductase (316 aa).

Cysteine 12 is a [4Fe-4S] cluster binding site. (2E)-4-hydroxy-3-methylbut-2-enyl diphosphate is bound by residues histidine 41 and histidine 74. The dimethylallyl diphosphate site is built by histidine 41 and histidine 74. The isopentenyl diphosphate site is built by histidine 41 and histidine 74. Cysteine 96 contributes to the [4Fe-4S] cluster binding site. A (2E)-4-hydroxy-3-methylbut-2-enyl diphosphate-binding site is contributed by histidine 124. Histidine 124 is a dimethylallyl diphosphate binding site. Histidine 124 is an isopentenyl diphosphate binding site. Residue glutamate 126 is the Proton donor of the active site. Threonine 167 contributes to the (2E)-4-hydroxy-3-methylbut-2-enyl diphosphate binding site. Position 197 (cysteine 197) interacts with [4Fe-4S] cluster. The (2E)-4-hydroxy-3-methylbut-2-enyl diphosphate site is built by serine 225, serine 226, asparagine 227, and serine 269. Dimethylallyl diphosphate is bound by residues serine 225, serine 226, asparagine 227, and serine 269. Positions 225, 226, 227, and 269 each coordinate isopentenyl diphosphate.

Belongs to the IspH family. As to quaternary structure, homodimer. It depends on [4Fe-4S] cluster as a cofactor.

It carries out the reaction isopentenyl diphosphate + 2 oxidized [2Fe-2S]-[ferredoxin] + H2O = (2E)-4-hydroxy-3-methylbut-2-enyl diphosphate + 2 reduced [2Fe-2S]-[ferredoxin] + 2 H(+). The enzyme catalyses dimethylallyl diphosphate + 2 oxidized [2Fe-2S]-[ferredoxin] + H2O = (2E)-4-hydroxy-3-methylbut-2-enyl diphosphate + 2 reduced [2Fe-2S]-[ferredoxin] + 2 H(+). It participates in isoprenoid biosynthesis; dimethylallyl diphosphate biosynthesis; dimethylallyl diphosphate from (2E)-4-hydroxy-3-methylbutenyl diphosphate: step 1/1. Its pathway is isoprenoid biosynthesis; isopentenyl diphosphate biosynthesis via DXP pathway; isopentenyl diphosphate from 1-deoxy-D-xylulose 5-phosphate: step 6/6. Its function is as follows. Catalyzes the conversion of 1-hydroxy-2-methyl-2-(E)-butenyl 4-diphosphate (HMBPP) into a mixture of isopentenyl diphosphate (IPP) and dimethylallyl diphosphate (DMAPP). Acts in the terminal step of the DOXP/MEP pathway for isoprenoid precursor biosynthesis. The polypeptide is 4-hydroxy-3-methylbut-2-enyl diphosphate reductase (Salmonella agona (strain SL483)).